A 378-amino-acid chain; its full sequence is Gibberellin 20 oxidase 2 (378 aa).

Over residues 1–10 (MAILCTTTSP) the composition is skewed to polar residues. The disordered stretch occupies residues 1–26 (MAILCTTTSPAEKEHEPKQDLEKDQT). Over residues 11-25 (AEKEHEPKQDLEKDQ) the composition is skewed to basic and acidic residues. Residues 220–320 (ENDSIMRLNH…RKSMAFFLCP (101 aa)) enclose the Fe2OG dioxygenase domain. 3 residues coordinate Fe cation: His-245, Asp-247, and His-301. Arg-311 is a catalytic residue.

It belongs to the iron/ascorbate-dependent oxidoreductase family. GA20OX subfamily. The cofactor is Fe(2+). It depends on L-ascorbate as a cofactor. In terms of tissue distribution, expressed in inflorescence and developing siliques. Detected in seeds, roots, cotyledons and leaves. In seeds, specifically detected at the rim of the embryo and the outer integument.

It catalyses the reaction gibberellin A12 + 2 2-oxoglutarate + 3 O2 + H(+) = gibberellin A9 + 2 succinate + 3 CO2 + 2 H2O. The catalysed reaction is gibberellin A12 + 2-oxoglutarate + O2 = gibberellin A15 + succinate + CO2. It carries out the reaction gibberellin A15 + 2-oxoglutarate + O2 = gibberellin A24 + succinate + CO2 + H2O. The enzyme catalyses gibberellin A53 + 2-oxoglutarate + O2 = gibberellin A44 + succinate + CO2. It catalyses the reaction gibberellin A12 + 3 2-oxoglutarate + 3 O2 = gibberellin A25 + 3 succinate + 3 CO2 + H2O + H(+). The protein operates within plant hormone biosynthesis; gibberellin biosynthesis. In terms of biological role, key oxidase enzyme in the biosynthesis of gibberellin that catalyzes the conversion of GA12 to GA9, via a three-step oxidation at C-20 of the GA skeleton, and GA25 is also formed as a minor product. GA53 is less effectively oxidized than GA12 and is only oxidized one step to GA44. Involved in the promotion of the floral transition, fertility and silique elongation, but plays only a minor role in elongation of seedling organs. Acts redundantly with GA20OX1. This is Gibberellin 20 oxidase 2 (GA20OX2) from Arabidopsis thaliana (Mouse-ear cress).